The following is a 398-amino-acid chain: Alpha-2,8-sialyltransferase 8F (398 aa).

Residues 1 to 3 are Cytoplasmic-facing; it reads MRP. Residues 4 to 24 form a helical; Signal-anchor for type II membrane protein membrane-spanning segment; that stretch reads GGALLALLASLLLLLLLRLLW. At 25-398 the chain is on the lumenal side; the sequence is CPADAPGRAR…KLQFSKCEVA (374 aa). N-linked (GlcNAc...) asparagine glycans are attached at residues Asn-66, Asn-93, Asn-151, and Asn-196. Cystine bridges form between Cys-186–Cys-335 and Cys-200–Cys-395. Residues Asn-214, 236 to 238, and 322 to 324 each bind substrate; these read NPS and STG. His-370 serves as the catalytic Proton donor/acceptor.

Belongs to the glycosyltransferase 29 family.

Its subcellular location is the golgi apparatus membrane. The enzyme catalyses a ganglioside GM3 + CMP-N-acetyl-beta-neuraminate = a ganglioside GD3 + CMP + H(+). It carries out the reaction a ganglioside GM3 (d18:1(4E)) + CMP-N-acetyl-beta-neuraminate = a ganglioside GD3 (d18:1(4E)) + CMP + H(+). It catalyses the reaction a ganglioside GD1a (d18:1(4E)) + CMP-N-acetyl-beta-neuraminate = a ganglioside GT1a (d18:1(4E)) + CMP + H(+). The catalysed reaction is a ganglioside GD1a + CMP-N-acetyl-beta-neuraminate = a ganglioside GT1a + CMP + H(+). The enzyme catalyses a ganglioside GM1b (d18:1(4E)) + CMP-N-acetyl-beta-neuraminate = a ganglioside GD1c (d18:1(4E)) + CMP + H(+). It carries out the reaction a ganglioside GM1b + CMP-N-acetyl-beta-neuraminate = a ganglioside GD1c + CMP + H(+). It catalyses the reaction a ganglioside GM4 (d18:1(4E)) + CMP-N-acetyl-beta-neuraminate = an N-acetyl-alpha-neuraminosyl-(2-&gt;8)-N-acetyl-alpha-neuraminosyl-(2-&gt;3)-beta-D-galactosyl-(1&lt;-&gt;1')-N-acylsphing-4-enine + CMP + H(+). The catalysed reaction is N-acetyl-alpha-neuraminosyl-(2-&gt;3)-beta-D-galactosyl-(1&lt;-&gt;1')-ceramide + CMP-N-acetyl-beta-neuraminate = N-acetyl-alpha-neuraminosyl-(2-&gt;8)-N-acetyl-alpha-neuraminosyl-(2-&gt;3)-beta-D-galactosyl-(1&lt;-&gt;1')-ceramide + CMP + H(+). The enzyme catalyses a ganglioside GT1b (d18:1(4E)) + CMP-N-acetyl-beta-neuraminate = a ganglioside GQ1b (d18:1(4E)) + CMP + H(+). It carries out the reaction a ganglioside GT1b + CMP-N-acetyl-beta-neuraminate = a ganglioside GQ1b + CMP + H(+). Its pathway is protein modification; protein glycosylation. Functionally, alpha-2,8-sialyltransferase that prefers O-glycans to N-glycans or glycolipids as acceptor substrates. The minimal acceptor substrate is the NeuAc-alpha-2,3(6)-Gal sequence at the non-reducing end of their carbohydrate groups. This chain is Alpha-2,8-sialyltransferase 8F (ST8SIA6), found in Pan troglodytes (Chimpanzee).